The sequence spans 78 residues: DNA-directed RNA polymerase subunit Rpo5 (78 aa).

The protein belongs to the archaeal Rpo5/eukaryotic RPB5 RNA polymerase subunit family. In terms of assembly, part of the RNA polymerase complex.

It is found in the cytoplasm. It catalyses the reaction RNA(n) + a ribonucleoside 5'-triphosphate = RNA(n+1) + diphosphate. Functionally, DNA-dependent RNA polymerase (RNAP) catalyzes the transcription of DNA into RNA using the four ribonucleoside triphosphates as substrates. In Methanococcus maripaludis (strain C7 / ATCC BAA-1331), this protein is DNA-directed RNA polymerase subunit Rpo5.